A 163-amino-acid polypeptide reads, in one-letter code: Small ribosomal subunit protein bS18c (163 aa).

Disordered stretches follow at residues 1-52 and 144-163; these read MYIS…IGPG and NLRNSNQNLRNNNRNLSSDC. Residues 7-48 are compositionally biased toward basic residues; that stretch reads PFRKSKQPFRKSKQTFHKSKQPFRKFKQPFRKSKQPFRRRSR.

The protein belongs to the bacterial ribosomal protein bS18 family. Part of the 30S ribosomal subunit.

The protein localises to the plastid. It localises to the chloroplast. This is Small ribosomal subunit protein bS18c from Sorghum bicolor (Sorghum).